The chain runs to 546 residues: Chaperonin GroEL (546 aa).

Residues Thr30 to Pro33, Lys51, Asp87 to Thr91, Gly415, Asn479 to Ala481, and Asp495 each bind ATP. The segment at Asp527 to Met546 is disordered. A compositionally biased stretch (gly residues) spans Gly536–Met546.

Belongs to the chaperonin (HSP60) family. Forms a cylinder of 14 subunits composed of two heptameric rings stacked back-to-back. Interacts with the co-chaperonin GroES.

The protein localises to the cytoplasm. It catalyses the reaction ATP + H2O + a folded polypeptide = ADP + phosphate + an unfolded polypeptide.. Its function is as follows. Together with its co-chaperonin GroES, plays an essential role in assisting protein folding. The GroEL-GroES system forms a nano-cage that allows encapsulation of the non-native substrate proteins and provides a physical environment optimized to promote and accelerate protein folding. This is Chaperonin GroEL from Acidovorax ebreus (strain TPSY) (Diaphorobacter sp. (strain TPSY)).